Reading from the N-terminus, the 547-residue chain is Hydroxylamine reductase (547 aa).

The [4Fe-4S] cluster site is built by Cys-5, Cys-8, Cys-17, and Cys-23. His-242, Glu-266, Cys-310, Cys-401, Cys-429, Cys-454, Glu-489, and Lys-491 together coordinate hybrid [4Fe-2O-2S] cluster. At Cys-401 the chain carries Cysteine persulfide.

The protein belongs to the HCP family. [4Fe-4S] cluster is required as a cofactor. It depends on hybrid [4Fe-2O-2S] cluster as a cofactor.

Its subcellular location is the cytoplasm. The catalysed reaction is A + NH4(+) + H2O = hydroxylamine + AH2 + H(+). Functionally, catalyzes the reduction of hydroxylamine to form NH(3) and H(2)O. This Thermoanaerobacter pseudethanolicus (strain ATCC 33223 / 39E) (Clostridium thermohydrosulfuricum) protein is Hydroxylamine reductase.